Consider the following 236-residue polypeptide: Thymidylate kinase (236 aa).

Residue 9-16 (GPEGSGKS) coordinates ATP.

This sequence belongs to the thymidylate kinase family.

The catalysed reaction is dTMP + ATP = dTDP + ADP. Its function is as follows. Phosphorylation of dTMP to form dTDP in both de novo and salvage pathways of dTTP synthesis. In Herpetosiphon aurantiacus (strain ATCC 23779 / DSM 785 / 114-95), this protein is Thymidylate kinase.